A 116-amino-acid chain; its full sequence is Large ribosomal subunit protein bL19 (116 aa).

Belongs to the bacterial ribosomal protein bL19 family.

In terms of biological role, this protein is located at the 30S-50S ribosomal subunit interface and may play a role in the structure and function of the aminoacyl-tRNA binding site. In Staphylococcus haemolyticus (strain JCSC1435), this protein is Large ribosomal subunit protein bL19.